Here is a 235-residue protein sequence, read N- to C-terminus: Urease accessory protein UreF (235 aa).

The protein belongs to the UreF family. UreD, UreF and UreG form a complex that acts as a GTP-hydrolysis-dependent molecular chaperone, activating the urease apoprotein by helping to assemble the nickel containing metallocenter of UreC. The UreE protein probably delivers the nickel.

It localises to the cytoplasm. Functionally, required for maturation of urease via the functional incorporation of the urease nickel metallocenter. The polypeptide is Urease accessory protein UreF (Haemophilus influenzae (strain PittGG)).